Here is a 132-residue protein sequence, read N- to C-terminus: RING-H2 finger protein ATL39 (132 aa).

The chain crosses the membrane as a helical span at residues 10 to 30; sequence TIVFAFASIGFIAFYIINYYI. An RING-type; atypical zinc finger spans residues 85–127; that stretch reads CVVCLNEFKDDETLRLVPPCVHVFHADCVDIWLSHSSTCPICR.

It belongs to the RING-type zinc finger family. ATL subfamily.

It is found in the membrane. The enzyme catalyses S-ubiquitinyl-[E2 ubiquitin-conjugating enzyme]-L-cysteine + [acceptor protein]-L-lysine = [E2 ubiquitin-conjugating enzyme]-L-cysteine + N(6)-ubiquitinyl-[acceptor protein]-L-lysine.. The protein operates within protein modification; protein ubiquitination. The polypeptide is RING-H2 finger protein ATL39 (ATL39) (Arabidopsis thaliana (Mouse-ear cress)).